A 267-amino-acid chain; its full sequence is Formamidopyrimidine-DNA glycosylase (267 aa).

Pro-2 (schiff-base intermediate with DNA) is an active-site residue. Catalysis depends on Glu-3, which acts as the Proton donor. Lys-53 (proton donor; for beta-elimination activity) is an active-site residue. 2 residues coordinate DNA: His-82 and Arg-100. Residues 230-264 (AVYGREGLPCPACGRPVERRVVAGRGTHFCPTCQG) form an FPG-type zinc finger. The Proton donor; for delta-elimination activity role is filled by Arg-254.

Belongs to the FPG family. Monomer. It depends on Zn(2+) as a cofactor.

The enzyme catalyses Hydrolysis of DNA containing ring-opened 7-methylguanine residues, releasing 2,6-diamino-4-hydroxy-5-(N-methyl)formamidopyrimidine.. It carries out the reaction 2'-deoxyribonucleotide-(2'-deoxyribose 5'-phosphate)-2'-deoxyribonucleotide-DNA = a 3'-end 2'-deoxyribonucleotide-(2,3-dehydro-2,3-deoxyribose 5'-phosphate)-DNA + a 5'-end 5'-phospho-2'-deoxyribonucleoside-DNA + H(+). In terms of biological role, involved in base excision repair of DNA damaged by oxidation or by mutagenic agents. Acts as a DNA glycosylase that recognizes and removes damaged bases. Has a preference for oxidized purines, such as 7,8-dihydro-8-oxoguanine (8-oxoG). Has AP (apurinic/apyrimidinic) lyase activity and introduces nicks in the DNA strand. Cleaves the DNA backbone by beta-delta elimination to generate a single-strand break at the site of the removed base with both 3'- and 5'-phosphates. In Thermus thermophilus (strain ATCC BAA-163 / DSM 7039 / HB27), this protein is Formamidopyrimidine-DNA glycosylase.